A 200-amino-acid chain; its full sequence is Large ribosomal subunit protein bL25 (200 aa).

The segment at 1–20 (MEARELKANVRKESGKEQAR) is disordered.

It belongs to the bacterial ribosomal protein bL25 family. CTC subfamily. As to quaternary structure, part of the 50S ribosomal subunit; part of the 5S rRNA/L5/L18/L25 subcomplex. Contacts the 5S rRNA. Binds to the 5S rRNA independently of L5 and L18.

In terms of biological role, this is one of the proteins that binds to the 5S RNA in the ribosome where it forms part of the central protuberance. This is Large ribosomal subunit protein bL25 from Syntrophus aciditrophicus (strain SB).